We begin with the raw amino-acid sequence, 389 residues long: Chalcone synthase 1 (389 aa).

The active site involves Cys-164.

It belongs to the thiolase-like superfamily. Chalcone/stilbene synthases family.

The catalysed reaction is (E)-4-coumaroyl-CoA + 3 malonyl-CoA + 3 H(+) = 2',4,4',6'-tetrahydroxychalcone + 3 CO2 + 4 CoA. Its pathway is secondary metabolite biosynthesis; flavonoid biosynthesis. The primary product of this enzyme is 4,2',4',6'-tetrahydroxychalcone (also termed naringenin-chalcone or chalcone) which can under specific conditions spontaneously isomerize into naringenin. The chain is Chalcone synthase 1 (CHS1) from Medicago sativa (Alfalfa).